The sequence spans 368 residues: Phosphate acyltransferase (368 aa).

The interval 334-368 (AAPLGESGRDADGAGQASPSAGQPAEPSAALSSKT) is disordered.

Belongs to the PlsX family. As to quaternary structure, homodimer. Probably interacts with PlsY.

The protein localises to the cytoplasm. The enzyme catalyses a fatty acyl-[ACP] + phosphate = an acyl phosphate + holo-[ACP]. Its pathway is lipid metabolism; phospholipid metabolism. Functionally, catalyzes the reversible formation of acyl-phosphate (acyl-PO(4)) from acyl-[acyl-carrier-protein] (acyl-ACP). This enzyme utilizes acyl-ACP as fatty acyl donor, but not acyl-CoA. This chain is Phosphate acyltransferase, found in Burkholderia thailandensis (strain ATCC 700388 / DSM 13276 / CCUG 48851 / CIP 106301 / E264).